The chain runs to 330 residues: DNA-directed RNA polymerase subunit alpha (330 aa).

Residues 1–229 form an alpha N-terminal domain (alpha-NTD) region; the sequence is MKNLKFIKPF…DHFNVLVELS (229 aa). The tract at residues 245–330 is alpha C-terminal domain (alpha-CTD); it reads AHNYVLDLEI…HSVEEDKDKH (86 aa).

Belongs to the RNA polymerase alpha chain family. Homodimer. The RNAP catalytic core consists of 2 alpha, 1 beta, 1 beta' and 1 omega subunit. When a sigma factor is associated with the core the holoenzyme is formed, which can initiate transcription.

It carries out the reaction RNA(n) + a ribonucleoside 5'-triphosphate = RNA(n+1) + diphosphate. DNA-dependent RNA polymerase catalyzes the transcription of DNA into RNA using the four ribonucleoside triphosphates as substrates. The protein is DNA-directed RNA polymerase subunit alpha of Aster yellows witches'-broom phytoplasma (strain AYWB).